Here is a 321-residue protein sequence, read N- to C-terminus: Beta-ketoacyl-[acyl-carrier-protein] synthase III (321 aa).

Residues Cys-115 and His-248 contribute to the active site. An ACP-binding region spans residues 249 to 253; that stretch reads QANIR. Residue Asn-278 is part of the active site.

Belongs to the thiolase-like superfamily. FabH family. Homodimer.

The protein resides in the cytoplasm. The catalysed reaction is malonyl-[ACP] + acetyl-CoA + H(+) = 3-oxobutanoyl-[ACP] + CO2 + CoA. Its pathway is lipid metabolism; fatty acid biosynthesis. Its function is as follows. Catalyzes the condensation reaction of fatty acid synthesis by the addition to an acyl acceptor of two carbons from malonyl-ACP. Catalyzes the first condensation reaction which initiates fatty acid synthesis and may therefore play a role in governing the total rate of fatty acid production. Possesses both acetoacetyl-ACP synthase and acetyl transacylase activities. Its substrate specificity determines the biosynthesis of branched-chain and/or straight-chain of fatty acids. This is Beta-ketoacyl-[acyl-carrier-protein] synthase III from Aromatoleum aromaticum (strain DSM 19018 / LMG 30748 / EbN1) (Azoarcus sp. (strain EbN1)).